The sequence spans 260 residues: Meiotic recombination protein rec6 (260 aa).

Positions 197 to 222 are disordered; sequence QYSESSLLDDSQLLCSSPPVDSTEEA. Residues 199-213 are compositionally biased toward low complexity; that stretch reads SESSLLDDSQLLCSS.

Belongs to the TOP6B-like family. As to quaternary structure, component of the DSB catalytic core (DSBC) complex, composed of at least rec12, rec6 and rec14. The complex interacts with mde2.

In terms of biological role, required for formation of the rec12-mediated double-strand breaks (DSBs) that initiate meiotic recombination. May be involved primarily in the early steps of meiotic recombination. The protein is Meiotic recombination protein rec6 of Schizosaccharomyces pombe (strain 972 / ATCC 24843) (Fission yeast).